Consider the following 326-residue polypeptide: Biotin synthase (326 aa).

The Radical SAM core domain maps to 48 to 277 (FGAGKVDLCS…SARIRMAGGR (230 aa)). Residues C66, C70, and C73 each contribute to the [4Fe-4S] cluster site. [2Fe-2S] cluster is bound by residues S110, C142, C202, and R272.

This sequence belongs to the radical SAM superfamily. Biotin synthase family. As to quaternary structure, homodimer. [4Fe-4S] cluster serves as cofactor. Requires [2Fe-2S] cluster as cofactor.

The catalysed reaction is (4R,5S)-dethiobiotin + (sulfur carrier)-SH + 2 reduced [2Fe-2S]-[ferredoxin] + 2 S-adenosyl-L-methionine = (sulfur carrier)-H + biotin + 2 5'-deoxyadenosine + 2 L-methionine + 2 oxidized [2Fe-2S]-[ferredoxin]. The protein operates within cofactor biosynthesis; biotin biosynthesis; biotin from 7,8-diaminononanoate: step 2/2. In terms of biological role, catalyzes the conversion of dethiobiotin (DTB) to biotin by the insertion of a sulfur atom into dethiobiotin via a radical-based mechanism. This chain is Biotin synthase, found in Heliobacterium modesticaldum (strain ATCC 51547 / Ice1).